We begin with the raw amino-acid sequence, 437 residues long: Chromosomal replication initiator protein DnaA (437 aa).

Residues 1-67 are domain I, interacts with DnaA modulators; it reads MKNKIIASLK…KVVKDILGKD (67 aa). The tract at residues 67–97 is domain II; the sequence is DATYEITFKEIPYETKVESGPLIKKRPLLIT. Positions 98-313 are domain III, AAA+ region; sequence PLNPKYTFEN…GAILRLIAYR (216 aa). Residues Gly141, Gly143, Lys144, and Thr145 each coordinate ATP. The interval 314–437 is domain IV, binds dsDNA; sequence NLYGTLNLSI…SKGFAQGESM (124 aa).

This sequence belongs to the DnaA family. As to quaternary structure, oligomerizes as a right-handed, spiral filament on DNA at oriC.

It localises to the cytoplasm. In terms of biological role, plays an essential role in the initiation and regulation of chromosomal replication. ATP-DnaA binds to the origin of replication (oriC) to initiate formation of the DNA replication initiation complex once per cell cycle. Binds the DnaA box (a 9 base pair repeat at the origin) and separates the double-stranded (ds)DNA. Forms a right-handed helical filament on oriC DNA; dsDNA binds to the exterior of the filament while single-stranded (ss)DNA is stabiized in the filament's interior. The ATP-DnaA-oriC complex binds and stabilizes one strand of the AT-rich DNA unwinding element (DUE), permitting loading of DNA polymerase. After initiation quickly degrades to an ADP-DnaA complex that is not apt for DNA replication. Binds acidic phospholipids. This Thermosipho melanesiensis (strain DSM 12029 / CIP 104789 / BI429) protein is Chromosomal replication initiator protein DnaA.